The sequence spans 1375 residues: uncharacterized protein (1375 aa).

One can recognise a Helicase ATP-binding domain in the interval 277 to 476; sequence LLASGDIRGG…FGLLFLLRYS (200 aa). 290 to 297 lines the ATP pocket; that stretch reads DEMGMGKT. The RING-type zinc finger occupies 1092-1130; it reads CIICRDIIKQGFITTCGHLYCSFCLEAWLKHSSSCPMCK. Residues 1190 to 1336 form the Helicase C-terminal domain; that stretch reads TISKHLLYLK…QLDKLGLDVP (147 aa).

Belongs to the SNF2/RAD54 helicase family.

It localises to the nucleus. This is an uncharacterized protein from Schizosaccharomyces pombe (strain 972 / ATCC 24843) (Fission yeast).